A 71-amino-acid chain; its full sequence is High-potential iron-sulfur protein isozyme 2 (71 aa).

[4Fe-4S] cluster contacts are provided by C34, C37, C51, and C65.

This sequence belongs to the high-potential iron-sulfur protein (HiPIP) family. In terms of assembly, homodimer.

Specific class of high-redox-potential 4Fe-4S ferredoxins. Functions in anaerobic electron transport in most purple and in some other photosynthetic bacteria and in at least one genus (Paracoccus) of halophilic, denitrifying bacteria. The chain is High-potential iron-sulfur protein isozyme 2 (hip2) from Ectothiorhodospira shaposhnikovii (Ectothiorhodospira vacuolata).